Here is a 201-residue protein sequence, read N- to C-terminus: 3-isopropylmalate dehydratase small subunit (201 aa).

This sequence belongs to the LeuD family. LeuD type 1 subfamily. In terms of assembly, heterodimer of LeuC and LeuD.

It carries out the reaction (2R,3S)-3-isopropylmalate = (2S)-2-isopropylmalate. Its pathway is amino-acid biosynthesis; L-leucine biosynthesis; L-leucine from 3-methyl-2-oxobutanoate: step 2/4. Functionally, catalyzes the isomerization between 2-isopropylmalate and 3-isopropylmalate, via the formation of 2-isopropylmaleate. The polypeptide is 3-isopropylmalate dehydratase small subunit (Cronobacter sakazakii (strain ATCC BAA-894) (Enterobacter sakazakii)).